The sequence spans 410 residues: MKQELIERFTRYVKIDTQSNEDSHTVPTTPGQIEFGKLLVEELKEVGLTEVTMDDNGYVMATLPANTDKDVPVIGFLAHLDTATDFTGKNVKPQIHENFDGNAITLNEELNVVLTPEQFPELPSYKGHTIITTDGTTLLGADDKAGLTEIMVAMNYLIHNPQIKHGKVRVAFTPDEEIGRGPAHFDVEAFGASFAYTMDGGPLGGLEYESFNAAGAKLTFNGTNTHPGTAKNKMRNATKLAMEFNGHLPVEEAPEYTEGYEGFYHLLSLNGDVEQSKAYYIIRDFDRKNFEARKNTIENIVKQMQEKYGQDAVVLEMNDQYYNMLEKIEPVREIVDIAYEAMKSLNIEPNIHPIRGGTDGSQLSYMGLPTPNIFTGGENYHGKFEYVSVDVMEKAVQVIIEIARRFEEQA.

Zn(2+) is bound at residue H79. Residue D81 is part of the active site. D142 lines the Zn(2+) pocket. E176 serves as the catalytic Proton acceptor. Zn(2+) contacts are provided by E177, D199, and H381.

The protein belongs to the peptidase M20B family. Zn(2+) is required as a cofactor.

Its subcellular location is the cytoplasm. The enzyme catalyses Release of the N-terminal residue from a tripeptide.. Its function is as follows. Cleaves the N-terminal amino acid of tripeptides. The protein is Peptidase T of Bacillus thuringiensis subsp. konkukian (strain 97-27).